We begin with the raw amino-acid sequence, 37 residues long: MKVRPSVKPICEKCKIIKRKGRVMVICENPRHKQKQG.

It belongs to the bacterial ribosomal protein bL36 family.

In Clostridium kluyveri (strain NBRC 12016), this protein is Large ribosomal subunit protein bL36.